Consider the following 842-residue polypeptide: G-type lectin S-receptor-like serine/threonine-protein kinase At1g11330 (842 aa).

The first 29 residues, 1 to 29 (MVVSVTIRRRFVLLLLACTCLLSRRLCFG), serve as a signal peptide directing secretion. At 30–444 (EDRITFSSPI…AHSELKTHSN (415 aa)) the chain is on the extracellular side. Residues 32-157 (RITFSSPIKD…RNNGEILWES (126 aa)) enclose the Bulb-type lectin domain. N-linked (GlcNAc...) asparagine glycans are attached at residues asparagine 63, asparagine 94, asparagine 122, asparagine 130, asparagine 196, and asparagine 260. The 37-residue stretch at 294-330 (PYTDCDAYGRCGRFGSCHAGENPPCKCVKGFVPKNNT) folds into the EGF-like; atypical domain. 2 disulfides stabilise this stretch: cysteine 298–cysteine 310 and cysteine 304–cysteine 318. N-linked (GlcNAc...) asparagine glycans are attached at residues asparagine 328, asparagine 336, asparagine 354, and asparagine 396. Positions 349-435 (CERQRNVSNG…SGIDLFIRVA (87 aa)) constitute a PAN domain. Disulfide bonds link cysteine 389/cysteine 410 and cysteine 393/cysteine 399. A helical membrane pass occupies residues 445 to 465 (LAVMIAAPVIGVMLIAAVCVL). Topologically, residues 466 to 842 (LACRKYKKRP…DVSLTAVTGR (377 aa)) are cytoplasmic. Positions 524–810 (FSLRNKLGQG…SLADPKQPAF (287 aa)) constitute a Protein kinase domain. ATP is bound by residues 530–538 (LGQGGFGPV) and lysine 552. 2 positions are modified to phosphoserine: serine 558 and serine 573. Residues 613–630 (MKQKILDWKTRFNIMEGI) are caM-binding. Catalysis depends on aspartate 649, which acts as the Proton acceptor. Residues serine 653 and serine 666 each carry the phosphoserine modification. The residue at position 683 (threonine 683) is a Phosphothreonine. Residues serine 726, serine 727, serine 821, and serine 830 each carry the phosphoserine modification. The interval 814-842 (RGASEAESSDQSSQKVSINDVSLTAVTGR) is disordered. The segment covering 818–827 (EAESSDQSSQ) has biased composition (low complexity). Over residues 828–842 (KVSINDVSLTAVTGR) the composition is skewed to polar residues. Threonine 837 bears the Phosphothreonine mark.

Belongs to the protein kinase superfamily. Ser/Thr protein kinase family.

It is found in the cell membrane. It carries out the reaction L-seryl-[protein] + ATP = O-phospho-L-seryl-[protein] + ADP + H(+). The enzyme catalyses L-threonyl-[protein] + ATP = O-phospho-L-threonyl-[protein] + ADP + H(+). The protein is G-type lectin S-receptor-like serine/threonine-protein kinase At1g11330 of Arabidopsis thaliana (Mouse-ear cress).